A 120-amino-acid polypeptide reads, in one-letter code: UPF0231 protein YacL (120 aa).

This sequence belongs to the UPF0231 family.

In Escherichia coli O81 (strain ED1a), this protein is UPF0231 protein YacL.